A 104-amino-acid polypeptide reads, in one-letter code: Large ribosomal subunit protein bL21 (104 aa).

It belongs to the bacterial ribosomal protein bL21 family. As to quaternary structure, part of the 50S ribosomal subunit. Contacts protein L20.

This protein binds to 23S rRNA in the presence of protein L20. The protein is Large ribosomal subunit protein bL21 of Streptococcus equi subsp. equi (strain 4047).